We begin with the raw amino-acid sequence, 142 residues long: Large ribosomal subunit protein uL29 (142 aa).

This sequence belongs to the universal ribosomal protein uL29 family.

This chain is Large ribosomal subunit protein uL29 (RPL35), found in Theileria annulata.